A 605-amino-acid chain; its full sequence is Vicilin GC72-A (605 aa).

Residues 1-23 (MVRNKSVFVVLLFSLFLSFGLLC) form the signal peptide. 2 disordered regions span residues 52–81 (TRGQ…EDPQ) and 157–181 (GERE…QRNN). The segment covering 166 to 175 (EEEEESDEGE) has biased composition (acidic residues). Cupin type-1 domains follow at residues 183-341 (YYFH…EQLD) and 387-564 (FNLL…RLVD). Residues 465-485 (SSDWSSREEEEQEEQEVERRS) form a disordered region.

The protein belongs to the 7S seed storage protein family.

It is found in the vacuole. Its subcellular location is the aleurone grain. Functionally, seed storage protein. The polypeptide is Vicilin GC72-A (Gossypium hirsutum (Upland cotton)).